The chain runs to 206 residues: Ribosomal RNA large subunit methyltransferase E (206 aa).

5 residues coordinate S-adenosyl-L-methionine: G60, W62, D80, D96, and D121. The Proton acceptor role is filled by K161.

This sequence belongs to the class I-like SAM-binding methyltransferase superfamily. RNA methyltransferase RlmE family.

It localises to the cytoplasm. The catalysed reaction is uridine(2552) in 23S rRNA + S-adenosyl-L-methionine = 2'-O-methyluridine(2552) in 23S rRNA + S-adenosyl-L-homocysteine + H(+). Functionally, specifically methylates the uridine in position 2552 of 23S rRNA at the 2'-O position of the ribose in the fully assembled 50S ribosomal subunit. The sequence is that of Ribosomal RNA large subunit methyltransferase E from Nitrosomonas eutropha (strain DSM 101675 / C91 / Nm57).